Here is a 147-residue protein sequence, read N- to C-terminus: Ubiquitin-conjugating enzyme E2 D4 (147 aa).

A UBC core domain is found at 1-147 (MALKRIQKEL…AREWTQKYAM (147 aa)). The active-site Glycyl thioester intermediate is cysteine 85.

The protein belongs to the ubiquitin-conjugating enzyme family.

The catalysed reaction is S-ubiquitinyl-[E1 ubiquitin-activating enzyme]-L-cysteine + [E2 ubiquitin-conjugating enzyme]-L-cysteine = [E1 ubiquitin-activating enzyme]-L-cysteine + S-ubiquitinyl-[E2 ubiquitin-conjugating enzyme]-L-cysteine.. It functions in the pathway protein modification; protein ubiquitination. Functionally, accepts ubiquitin from the E1 complex and catalyzes its covalent attachment to other proteins. In vitro able to promote polyubiquitination using all 7 ubiquitin Lys residues, but may prefer 'Lys-11' and 'Lys-48'-linked polyubiquitination. This Homo sapiens (Human) protein is Ubiquitin-conjugating enzyme E2 D4 (UBE2D4).